A 433-amino-acid chain; its full sequence is UDP-N-acetylglucosamine 1-carboxyvinyltransferase (433 aa).

Lys-22–Asn-23 serves as a coordination point for phosphoenolpyruvate. Arg-96 contributes to the UDP-N-acetyl-alpha-D-glucosamine binding site. Cys-120 acts as the Proton donor in catalysis. 2-(S-cysteinyl)pyruvic acid O-phosphothioketal is present on Cys-120. UDP-N-acetyl-alpha-D-glucosamine-binding positions include Arg-125–Leu-129, Asp-308, and Ile-330.

This sequence belongs to the EPSP synthase family. MurA subfamily.

It localises to the cytoplasm. It carries out the reaction phosphoenolpyruvate + UDP-N-acetyl-alpha-D-glucosamine = UDP-N-acetyl-3-O-(1-carboxyvinyl)-alpha-D-glucosamine + phosphate. It functions in the pathway cell wall biogenesis; peptidoglycan biosynthesis. Its function is as follows. Cell wall formation. Adds enolpyruvyl to UDP-N-acetylglucosamine. The chain is UDP-N-acetylglucosamine 1-carboxyvinyltransferase from Koribacter versatilis (strain Ellin345).